A 105-amino-acid chain; its full sequence is ATP synthase subunit c (105 aa).

The next 3 helical transmembrane spans lie at 3 to 23, 32 to 52, and 78 to 98; these read FLSLFFLALAGVAFAHDGGMG, SILGAMIGLGIAAFGGAIGMG, and VAMAMIEAQVIYTLVFAIIAI.

This sequence belongs to the ATPase C chain family. As to quaternary structure, F-type ATPases have 2 components, F(1) - the catalytic core - and F(0) - the membrane proton channel. F(1) has five subunits: alpha(3), beta(3), gamma(1), delta(1), epsilon(1). F(0) has three main subunits: a(1), b(2) and c(10-14). The alpha and beta chains form an alternating ring which encloses part of the gamma chain. F(1) is attached to F(0) by a central stalk formed by the gamma and epsilon chains, while a peripheral stalk is formed by the delta and b chains.

It is found in the cell inner membrane. Functionally, f(1)F(0) ATP synthase produces ATP from ADP in the presence of a proton or sodium gradient. F-type ATPases consist of two structural domains, F(1) containing the extramembraneous catalytic core and F(0) containing the membrane proton channel, linked together by a central stalk and a peripheral stalk. During catalysis, ATP synthesis in the catalytic domain of F(1) is coupled via a rotary mechanism of the central stalk subunits to proton translocation. Its function is as follows. Key component of the F(0) channel; it plays a direct role in translocation across the membrane. A homomeric c-ring of between 10-14 subunits forms the central stalk rotor element with the F(1) delta and epsilon subunits. The polypeptide is ATP synthase subunit c (Helicobacter pylori (strain Shi470)).